The following is a 179-amino-acid chain: Large ribosomal subunit protein uL5 (179 aa).

This sequence belongs to the universal ribosomal protein uL5 family. Part of the 50S ribosomal subunit; part of the 5S rRNA/L5/L18/L25 subcomplex. Contacts the 5S rRNA and the P site tRNA. Forms a bridge to the 30S subunit in the 70S ribosome.

Functionally, this is one of the proteins that bind and probably mediate the attachment of the 5S RNA into the large ribosomal subunit, where it forms part of the central protuberance. In the 70S ribosome it contacts protein S13 of the 30S subunit (bridge B1b), connecting the 2 subunits; this bridge is implicated in subunit movement. Contacts the P site tRNA; the 5S rRNA and some of its associated proteins might help stabilize positioning of ribosome-bound tRNAs. In Carboxydothermus hydrogenoformans (strain ATCC BAA-161 / DSM 6008 / Z-2901), this protein is Large ribosomal subunit protein uL5.